We begin with the raw amino-acid sequence, 656 residues long: Broad substrate specificity ATP-binding cassette transporter ABCG2 (656 aa).

Residues 1 to 25 (MSSNSYQVSIPMSKRNTNGLPGSSS) form a disordered region. Residues 1-394 (MSSNSYQVSI…SFKNLLGNPQ (394 aa)) are Cytoplasmic-facing. Positions 37–286 (LSFHDICYRV…FASIGYNCEP (250 aa)) constitute an ABC transporter domain. ATP-binding positions include 80–87 (GPTGGGKS), 184–190 (RGVSGGE), E211, and H243. The 263-residue stretch at 390–652 (LGNPQASVAQ…TIAYLKLLLL (263 aa)) folds into the ABC transmembrane type-2 domain. Residues 395 to 415 (ASVAQIIVTIILGLVIGAIFY) form a helical membrane-spanning segment. The Extracellular portion of the chain corresponds to 416–429 (DLKNDPSGIQNRAG). The helical transmembrane segment at 430-450 (VLFFLTTNQCFSSVSAVELLV) threads the bilayer. At 451–478 (VEKKLFIHEYISGYYRVSSYFFGKLLSD) the chain is on the cytoplasmic side. A helical transmembrane segment spans residues 479–498 (LLPMRMLPSIIFTCITYFLL). Residues 499–507 (GLKPAVGSF) are Extracellular-facing. The helical transmembrane segment at 508–530 (FIMMFTLMMVAYSASSMALAIAA) threads the bilayer. Residues 531-536 (GQSVVS) lie on the Cytoplasmic side of the membrane. A helical membrane pass occupies residues 537–557 (VATLLMTISFVFMMIFSGLLV). Residues 558 to 631 (NLKTVVPWLS…LSAWGLWQNH (74 aa)) lie on the Extracellular side of the membrane. C593 and C609 are joined by a disulfide. N597 and N601 each carry an N-linked (GlcNAc...) asparagine glycan. The chain crosses the membrane as a helical span at residues 632 to 652 (VALACMMVIFLTIAYLKLLLL). The Cytoplasmic portion of the chain corresponds to 653–656 (KKYS).

It belongs to the ABC transporter superfamily. ABCG family. Eye pigment precursor importer (TC 3.A.1.204) subfamily. As to quaternary structure, homodimer; disulfide-linked. The minimal functional unit is a homodimer, but the major oligomeric form in plasma membrane is a homotetramer with possibility of higher order oligomerization up to homododecamers. Post-translationally, N-glycosylated. Glycosylation-deficient ABCG2 is normally expressed and functional. In terms of processing, phosphorylated. Phosphorylation may regulate the localization to the plasma membrane, the homooligomerization and therefore, the activity of the transporter. As to expression, high expression in brain, kidney and lung. Also expressed in livere, colon, small intestine, heart, skeletal muscle, spleen, stomach and pancreas.

It is found in the cell membrane. The protein resides in the apical cell membrane. Its subcellular location is the mitochondrion membrane. The catalysed reaction is ATP + H2O + xenobioticSide 1 = ADP + phosphate + xenobioticSide 2.. The enzyme catalyses urate(in) + ATP + H2O = urate(out) + ADP + phosphate + H(+). It catalyses the reaction indoxyl sulfate(in) + ATP + H2O = indoxyl sulfate(out) + ADP + phosphate + H(+). It carries out the reaction sphing-4-enine 1-phosphate(in) + ATP + H2O = sphing-4-enine 1-phosphate(out) + ADP + phosphate + H(+). The catalysed reaction is estrone 3-sulfate(in) + ATP + H2O = estrone 3-sulfate(out) + ADP + phosphate + H(+). The enzyme catalyses dehydroepiandrosterone 3-sulfate(in) + ATP + H2O = dehydroepiandrosterone 3-sulfate(out) + ADP + phosphate + H(+). It catalyses the reaction 4-methylumbelliferone sulfate(in) + ATP + H2O = 4-methylumbelliferone sulfate(out) + ADP + phosphate + H(+). It carries out the reaction 5,7-dimethyl-2-methylamino-4-(3-pyridylmethyl)-1,3-benzothiazol-6-yl beta-D-glucuronate(in) + ATP + H2O = 5,7-dimethyl-2-methylamino-4-(3-pyridylmethyl)-1,3-benzothiazol-6-yl beta-D-glucuronate(out) + ADP + phosphate + H(+). The catalysed reaction is 4-methylumbelliferone beta-D-glucuronate(in) + ATP + H2O = 4-methylumbelliferone beta-D-glucuronate(out) + ADP + phosphate + H(+). The enzyme catalyses 5,7-dimethyl-2-methylamino-4-(3-pyridylmethyl)-1,3-benzothiazol-6-yl sulfate(in) + ATP + H2O = 5,7-dimethyl-2-methylamino-4-(3-pyridylmethyl)-1,3-benzothiazol-6-yl sulfate(out) + ADP + phosphate + H(+). It catalyses the reaction 17beta-estradiol 17-O-(beta-D-glucuronate)(in) + ATP + H2O = 17beta-estradiol 17-O-(beta-D-glucuronate)(out) + ADP + phosphate + H(+). It carries out the reaction methotrexate(in) + ATP + H2O = methotrexate(out) + ADP + phosphate + H(+). The catalysed reaction is riboflavin(in) + ATP + H2O = riboflavin(out) + ADP + phosphate + H(+). The enzyme catalyses pheophorbide a(in) + ATP + H2O = pheophorbide a(out) + ADP + phosphate + H(+). It catalyses the reaction itaconate(in) + ATP + H2O = itaconate(out) + ADP + phosphate + H(+). Its function is as follows. Broad substrate specificity ATP-dependent transporter of the ATP-binding cassette (ABC) family that actively extrudes a wide variety of physiological compounds, dietary toxins and xenobiotics from cells. Involved in porphyrin homeostasis, mediating the export of protoporphyrin IX (PPIX) from both mitochondria to cytosol and cytosol to extracellular space, it also functions in the cellular export of heme. Also mediates the efflux of sphingosine-1-P from cells. Acts as a urate exporter functioning in both renal and extrarenal urate excretion. In kidney, it also functions as a physiological exporter of the uremic toxin indoxyl sulfate. Also involved in the excretion of steroids like estrone 3-sulfate/E1S, 3beta-sulfooxy-androst-5-en-17-one/DHEAS, and other sulfate conjugates. Mediates the secretion of the riboflavin and biotin vitamins into milk. Extrudes pheophorbide a, a phototoxic porphyrin catabolite of chlorophyll, reducing its bioavailability. Plays an important role in the exclusion of xenobiotics from the brain. It confers to cells a resistance to multiple drugs and other xenobiotics including mitoxantrone, pheophorbide, camptothecin, methotrexate, azidothymidine, and the anthracyclines daunorubicin and doxorubicin, through the control of their efflux. In placenta, it limits the penetration of drugs from the maternal plasma into the fetus. May play a role in early stem cell self-renewal by blocking differentiation. In inflammatory macrophages, exports itaconate from the cytosol to the extracellular compartment and limits the activation of TFEB-dependent lysosome biogenesis involved in antibacterial innate immune response. This chain is Broad substrate specificity ATP-binding cassette transporter ABCG2 (ABCG2), found in Sus scrofa (Pig).